Consider the following 266-residue polypeptide: Sec-independent protein translocase protein TatC (266 aa).

6 helical membrane passes run 28–48 (MIIATIILMNNKNVIFDYILF), 93–113 (FNIYVWTCFIGGFILSFPYIF), 134–154 (GIIMMVTFLFILGVLFGYFIL), 183–203 (LIMHSILSMGITFLFPIFIYF), 221–241 (HAFLILLILASAITPGDIFST), and 242–262 (IVVLIPLMILYQFSIYISFYV).

Belongs to the TatC family. In terms of assembly, forms a complex with TatA.

The protein resides in the cell inner membrane. Part of the twin-arginine translocation (Tat) system that transports large folded proteins containing a characteristic twin-arginine motif in their signal peptide across membranes. The chain is Sec-independent protein translocase protein TatC from Blattabacterium sp. subsp. Periplaneta americana (strain BPLAN) (Periplaneta americana symbiotic bacterium).